The primary structure comprises 356 residues: UDP-N-acetylglucosamine--N-acetylmuramyl-(pentapeptide) pyrophosphoryl-undecaprenol N-acetylglucosamine transferase (356 aa).

Positions 166, 196, and 290 each coordinate UDP-N-acetyl-alpha-D-glucosamine.

It belongs to the glycosyltransferase 28 family. MurG subfamily.

Its subcellular location is the cell membrane. It catalyses the reaction Mur2Ac(oyl-L-Ala-gamma-D-Glu-L-Lys-D-Ala-D-Ala)-di-trans,octa-cis-undecaprenyl diphosphate + UDP-N-acetyl-alpha-D-glucosamine = beta-D-GlcNAc-(1-&gt;4)-Mur2Ac(oyl-L-Ala-gamma-D-Glu-L-Lys-D-Ala-D-Ala)-di-trans,octa-cis-undecaprenyl diphosphate + UDP + H(+). It participates in cell wall biogenesis; peptidoglycan biosynthesis. Its function is as follows. Cell wall formation. Catalyzes the transfer of a GlcNAc subunit on undecaprenyl-pyrophosphoryl-MurNAc-pentapeptide (lipid intermediate I) to form undecaprenyl-pyrophosphoryl-MurNAc-(pentapeptide)GlcNAc (lipid intermediate II). The chain is UDP-N-acetylglucosamine--N-acetylmuramyl-(pentapeptide) pyrophosphoryl-undecaprenol N-acetylglucosamine transferase from Staphylococcus aureus (strain bovine RF122 / ET3-1).